A 331-amino-acid polypeptide reads, in one-letter code: UDP-xylose and UDP-N-acetylglucosamine transporter (331 aa).

The next 10 membrane-spanning stretches (helical) occupy residues 5–25 (FAVT…ELLV), 30–50 (GCGN…GFIF), 59–79 (PQIP…VSVI), 92–112 (LHMI…IIIL), 122–142 (LSIV…AKQV), 153–173 (GVYA…ALLM), 201–221 (CLPL…AVLF), 238–260 (VMWF…VFIL), 267–289 (LTVT…LYFQ), and 301–321 (AVVF…PAAF).

The protein belongs to the nucleotide-sugar transporter family. SLC35B subfamily.

The protein resides in the golgi apparatus membrane. Sugar transporter that specifically mediates the transport of UDP-xylose (UDP-Xyl) and UDP-N-acetylglucosamine (UDP-GlcNAc) from cytosol into Golgi. The chain is UDP-xylose and UDP-N-acetylglucosamine transporter (slc35b4) from Danio rerio (Zebrafish).